The following is a 177-amino-acid chain: MIGILNRWRQFGRRYFWPHLLLGMVAASLGVPSNLSGVPDQAAIPNTSSSQSRQNYGATNFSSLALLHDMHRRPSFSVDYWQQHALRTVIRHLSFALAPQVAYARVQEVAEAEQVQPSQIQQLALLNTLNALLTHEFKPPTIIRYTEQIKRPVLSLHKPGLWLAQVQGIRAGPANFI.

Residues 1–30 (MIGILNRWRQFGRRYFWPHLLLGMVAASLG) form the signal peptide.

Belongs to the SecM family.

The protein resides in the cytoplasm. It is found in the cytosol. It localises to the periplasm. Functionally, regulates secA expression by translational coupling of the secM secA operon. Translational pausing at a specific Pro residue 5 residues before the end of the protein may allow disruption of a mRNA repressor helix that normally suppresses secA translation initiation. In Yersinia enterocolitica serotype O:8 / biotype 1B (strain NCTC 13174 / 8081), this protein is Secretion monitor.